The primary structure comprises 262 residues: Small ribosomal subunit protein eS4 (262 aa).

Positions 42–105 constitute an S4 RNA-binding domain; that stretch reads LPLXVFLRNR…NEHFRLAYDV (64 aa).

It belongs to the eukaryotic ribosomal protein eS4 family.

The protein is Small ribosomal subunit protein eS4 (RPS4) of Candida albicans (Yeast).